The following is a 311-amino-acid chain: Olfactory receptor 2A5 (311 aa).

The Extracellular portion of the chain corresponds to 1 to 24 (MTKNQTWVTEFILLGFPLSLRIQM). An N-linked (GlcNAc...) asparagine glycan is attached at asparagine 4. A helical membrane pass occupies residues 25–48 (LLSGLFSLLYVFTLLGNGAILGLI). At 49–56 (WLDSRLHT) the chain is on the cytoplasmic side. A helical membrane pass occupies residues 57 to 78 (PMYFFLSHLAIIDISYASNNVP). Topologically, residues 79 to 100 (KMLTNLGLNKRKTISFVPCTMQ) are extracellular. Cysteine 97 and cysteine 189 form a disulfide bridge. Residues 101–120 (TFLYMAFAHTECLILVMMSY) traverse the membrane as a helical segment. Topologically, residues 121–139 (DRYMAICHPLQYSVIMRWG) are cytoplasmic. Residues 140–158 (VCTVLAVTSWACGSLLALV) traverse the membrane as a helical segment. The Extracellular portion of the chain corresponds to 159–196 (HVVLILRLPFCGPHEINHFFCEILSVLKLACADTWLNQ). The chain crosses the membrane as a helical span at residues 197-219 (VVIFAASVFILVGPLCLVLVSYS). Residues 220 to 236 (RILAAILRIQSGEGRRK) lie on the Cytoplasmic side of the membrane. The chain crosses the membrane as a helical span at residues 237-259 (AFSTCSSHLCMVGLFFGSAIVMY). Over 260–272 (MAPKSRHPEEQQK) the chain is Extracellular. A helical membrane pass occupies residues 273–292 (VLSLFYSLFNPMLNPLIYSL). Residues 293–311 (RNAEVKGALKRVLWKQRSK) are Cytoplasmic-facing.

Belongs to the G-protein coupled receptor 1 family.

The protein localises to the cell membrane. Odorant receptor. The protein is Olfactory receptor 2A5 (OR2A5) of Homo sapiens (Human).